Consider the following 763-residue polypeptide: DEK domain-containing chromatin-associated protein 3 (763 aa).

Disordered stretches follow at residues 1 to 324 (MGED…RERK) and 458 to 681 (TGDV…SDKV). Residues 11-20 (PTANKTTSLE) show a composition bias toward polar residues. Basic and acidic residues-rich tracts occupy residues 32-44 (AGGKETQELAKDE), 72-97 (SEVKKNEDNAETQKMEEKVEVTKDEG), 124-172 (TVMK…KANG), and 180-242 (DIKE…KVED). Residues 60–96 (KDDEKAETEDKESEVKKNEDNAETQKMEEKVEVTKDE) adopt a coiled-coil conformation. Residues 214-286 (GKEKEDKEEN…KEESKGSKKR (73 aa)) are a coiled coil. A compositionally biased stretch (acidic residues) spans 243–252 (EKEGSEDEND). Basic and acidic residues predominate over residues 253–264 (NEKVESKDAKED). The span at 265 to 277 (EKEETNDDKEDEK) shows a compositional bias: acidic residues. Positions 284-291 (KKRGKGTS) match the Nuclear localization signal 1 motif. A compositionally biased stretch (basic and acidic residues) spans 295–311 (KVREKNKTEEVKKDAEP). Residues 475 to 484 (KGAKRKRTPK) are compositionally biased toward basic residues. A Nuclear localization signal 2 motif is present at residues 483–490 (PKKTSPTA). Low complexity predominate over residues 485–496 (KTSPTAGSSSSK). The stretch at 513-551 (KKSLAHSDDESEEEKEEEEKQEEEKAEEKEEKKEEENEN) forms a coiled coil. Residues 521 to 533 (DESEEEKEEEEKQ) are compositionally biased toward acidic residues. Positions 534–547 (EEEKAEEKEEKKEE) are enriched in basic and acidic residues. Over residues 557–578 (SEDEAPQPSESEEKDESEEHSE) the composition is skewed to acidic residues. Composition is skewed to low complexity over residues 606-615 (AVVAAKSSPP) and 650-660 (PIKASPAPSKS). A compositionally biased stretch (basic and acidic residues) spans 661-681 (ASKEKPVKRAGKGKDKPSDKV). In terms of domain architecture, DEK-C spans 676–731 (KPSDKVLKNAIVEILKRVDFSTATFTDILKELAKEFTEDLTPRKSSIKMIIQEELT). DNA-binding regions lie at residues 694-708 (DFSTATFTDILKELA) and 723-727 (KMIIQ). A coiled-coil region spans residues 723–753 (KMIIQEELTKLADEEEEEEKKEEDSEKEEAG). The disordered stretch occupies residues 730–763 (LTKLADEEEEEEKKEEDSEKEEAGGSGGGEEVKA). Residues 753 to 763 (GGSGGGEEVKA) show a composition bias toward gly residues.

Found in a mRNA splicing-dependent exon junction complex (EJC). Binds specifically histones H3 and H4. Interacts with TOP1A, SCC3, At1g61730, At1g20940, At1g13930, DEK4, HDT1, NIT1, SHL, CYP19-1, GEBPL, HSP70-3, PDP2, PDP3, KIN2, RPL11A and PDS5A. In terms of tissue distribution, highly expressed in young seedlings.

Its subcellular location is the nucleus. The protein resides in the nucleolus. Chromatin-associated protein which contributes to the modulation of chromatin structure (such as super-helical structure of DNA) and function. Binds to chromatin of protein-coding genes throughout the genome to regulate nucleosome occupancy and chromatin accessibility, and to modulate the expression of target genes. Negative regulator of stress tolerance (e.g. high salt). The chain is DEK domain-containing chromatin-associated protein 3 from Arabidopsis thaliana (Mouse-ear cress).